Reading from the N-terminus, the 389-residue chain is Probable peptidoglycan glycosyltransferase FtsW (389 aa).

Topologically, residues 1 to 14 (MPIRDWRQQSQRWP) are cytoplasmic. Residues 15-35 (IDYWLIGALAILITLGLTMVA) traverse the membrane as a helical segment. The Periplasmic segment spans residues 36-57 (SSSIAISEKRFGDPTHYLLRQM). Residues 58 to 78 (FSMGLGLMAAYIVLKIPLSFW) form a helical membrane-spanning segment. Topologically, residues 79–84 (RKHRGQ) are cytoplasmic. A helical membrane pass occupies residues 85–105 (LFIVGLVLLVLVLVFGREING). Residues 106-111 (SKRWLP) are Periplasmic-facing. Residues 112–132 (LVLMNFQVSEFMKIAVVVFMA) traverse the membrane as a helical segment. Over 133–144 (GYLDRHATAVRE) the chain is Cytoplasmic. Residues 145-165 (SFEAVIRLALPFGVMAILLLL) traverse the membrane as a helical segment. Topologically, residues 166–168 (EPD) are periplasmic. The helical transmembrane segment at 169–189 (FGSTFVIAVIITGMLLIAGAP) threads the bilayer. Topologically, residues 190–191 (WR) are cytoplasmic. The chain crosses the membrane as a helical span at residues 192–212 (FFVMTVLPIATLLVMMVITSP). Residues 213-268 (YRMARVTNFLDPWSDPFGNGYQLTQALIASGRGEWFGVGIGESVQKLLYLPDAHTD) are Periplasmic-facing. The helical transmembrane segment at 269 to 289 (FLFSIYAEEYGLIGVAFLALL) threads the bilayer. Residues 290–310 (YLTLLYRCFRIGRKAFNQTHY) lie on the Cytoplasmic side of the membrane. Residues 311 to 331 (FGGLIAYGVGIWIVLQAMINM) traverse the membrane as a helical segment. The Periplasmic segment spans residues 332 to 344 (GVNLGLFPTKGLT). Residues 345 to 365 (LPFMSYGGSSVLMLFIGVAMV) form a helical membrane-spanning segment. At 366-389 (LRVDLETRQAVLEHSVDESGQGKR) the chain is on the cytoplasmic side.

The protein belongs to the SEDS family. FtsW subfamily.

It is found in the cell inner membrane. The catalysed reaction is [GlcNAc-(1-&gt;4)-Mur2Ac(oyl-L-Ala-gamma-D-Glu-L-Lys-D-Ala-D-Ala)](n)-di-trans,octa-cis-undecaprenyl diphosphate + beta-D-GlcNAc-(1-&gt;4)-Mur2Ac(oyl-L-Ala-gamma-D-Glu-L-Lys-D-Ala-D-Ala)-di-trans,octa-cis-undecaprenyl diphosphate = [GlcNAc-(1-&gt;4)-Mur2Ac(oyl-L-Ala-gamma-D-Glu-L-Lys-D-Ala-D-Ala)](n+1)-di-trans,octa-cis-undecaprenyl diphosphate + di-trans,octa-cis-undecaprenyl diphosphate + H(+). Its pathway is cell wall biogenesis; peptidoglycan biosynthesis. Peptidoglycan polymerase that is essential for cell division. The polypeptide is Probable peptidoglycan glycosyltransferase FtsW (Hydrogenovibrio crunogenus (strain DSM 25203 / XCL-2) (Thiomicrospira crunogena)).